A 113-amino-acid polypeptide reads, in one-letter code: Eukaryotic translation initiation factor 1b (113 aa).

Ser2 bears the N-acetylserine mark. Ser9 bears the Phosphoserine mark.

The protein belongs to the SUI1 family.

Functionally, probably involved in translation. This is Eukaryotic translation initiation factor 1b (EIF1B) from Homo sapiens (Human).